The sequence spans 466 residues: Argininosuccinate lyase (466 aa).

Belongs to the lyase 1 family. Argininosuccinate lyase subfamily.

It is found in the cytoplasm. The enzyme catalyses 2-(N(omega)-L-arginino)succinate = fumarate + L-arginine. It functions in the pathway amino-acid biosynthesis; L-arginine biosynthesis; L-arginine from L-ornithine and carbamoyl phosphate: step 3/3. The polypeptide is Argininosuccinate lyase (Roseobacter denitrificans (strain ATCC 33942 / OCh 114) (Erythrobacter sp. (strain OCh 114))).